Reading from the N-terminus, the 838-residue chain is Protein kintoun (838 aa).

Disordered stretches follow at residues 106–125, 212–238, 370–411, 557–696, and 776–838; these read RPKNEVATDPSSGSRGLNWS, NPTAEEQEPHPLAHMFPTKPPAPGKPE, LRHF…TSSP, NAPL…DSCS, and QQRR…EMDD. Residues 114-125 show a composition bias toward polar residues; sequence DPSSGSRGLNWS. Residues 370–380 are compositionally biased toward basic and acidic residues; that stretch reads LRHFSREDSGV. The residue at position 378 (serine 378) is a Phosphoserine. Acidic residues predominate over residues 389 to 398; sequence PVEEDPDGEL. Over residues 557-572 the composition is skewed to basic and acidic residues; sequence NAPLDVEFERNQEGHA. A compositionally biased stretch (acidic residues) spans 583-592; that stretch reads EEEEEEEDKE. Over residues 601–611 the composition is skewed to low complexity; it reads DQQQQQQVQNK. 2 stretches are compositionally biased toward basic residues: residues 612–623 and 673–683; these read KSGKKQRKRNKK and RSHRGILKRFS. At serine 781 the chain carries Phosphoserine. The segment covering 789–802 has biased composition (basic and acidic residues); sequence EETRGSALKQKENP.

Belongs to the PIH1 family. Kintoun subfamily. As to quaternary structure, interacts with Pp1alpha-96A, Pp1-87B, Pp1-13C and flw.

It localises to the cytoplasm. Its function is as follows. Required for cytoplasmic pre-assembly of axonemal dyneins, thereby playing a central role in motility in cilia and flagella. Involved in pre-assembly of dynein arm complexes in the cytoplasm before intraflagellar transport loads them for the ciliary compartment. This chain is Protein kintoun, found in Drosophila sechellia (Fruit fly).